Consider the following 841-residue polypeptide: DNA ligase (841 aa).

Residues 54 to 58, 103 to 104, and Glu143 contribute to the NAD(+) site; these read DAEYD and SL. The N6-AMP-lysine intermediate role is filled by Lys145. NAD(+) is bound by residues Arg166, Glu203, Lys321, and Lys345. The Zn(2+) site is built by Cys471, Cys474, Cys489, and Cys495. Residues 554–575 form a disordered region; it reads KTVAESDQMPSEGSSVGASGKH. Polar residues predominate over residues 561 to 570; sequence QMPSEGSSVG. Positions 764–841 constitute a BRCT domain; sequence GINKAVAGKT…SEAELLTLLG (78 aa).

This sequence belongs to the NAD-dependent DNA ligase family. LigA subfamily. Requires Mg(2+) as cofactor. Mn(2+) serves as cofactor.

The enzyme catalyses NAD(+) + (deoxyribonucleotide)n-3'-hydroxyl + 5'-phospho-(deoxyribonucleotide)m = (deoxyribonucleotide)n+m + AMP + beta-nicotinamide D-nucleotide.. In terms of biological role, DNA ligase that catalyzes the formation of phosphodiester linkages between 5'-phosphoryl and 3'-hydroxyl groups in double-stranded DNA using NAD as a coenzyme and as the energy source for the reaction. It is essential for DNA replication and repair of damaged DNA. This is DNA ligase from Neisseria meningitidis serogroup C / serotype 2a (strain ATCC 700532 / DSM 15464 / FAM18).